The following is a 189-amino-acid chain: Mediator of RNA polymerase II transcription subunit 10b (189 aa).

The interval 1 to 22 (MDPTQNTSAGIGGSNGTIRYQT) is disordered.

The protein belongs to the Mediator complex subunit 10 family. In terms of assembly, component of the Mediator complex.

The protein resides in the nucleus. Functionally, component of the Mediator complex, a coactivator involved in the regulated transcription of nearly all RNA polymerase II-dependent genes. Mediator functions as a bridge to convey information from gene-specific regulatory proteins to the basal RNA polymerase II transcription machinery. The Mediator complex, having a compact conformation in its free form, is recruited to promoters by direct interactions with regulatory proteins and serves for the assembly of a functional preinitiation complex with RNA polymerase II and the general transcription factors. The polypeptide is Mediator of RNA polymerase II transcription subunit 10b (MED10B) (Arabidopsis thaliana (Mouse-ear cress)).